Reading from the N-terminus, the 1400-residue chain is DNA-directed RNA polymerase subunit beta' (1400 aa).

Positions 70, 72, 85, and 88 each coordinate Zn(2+). Mg(2+) is bound by residues D460, D462, and D464. Positions 814, 888, 895, and 898 each coordinate Zn(2+). The tract at residues 1367–1400 (DRQAKRAEAQEGPSAEQATDNLAALLNAGFSSDE) is disordered.

It belongs to the RNA polymerase beta' chain family. In terms of assembly, the RNAP catalytic core consists of 2 alpha, 1 beta, 1 beta' and 1 omega subunit. When a sigma factor is associated with the core the holoenzyme is formed, which can initiate transcription. Requires Mg(2+) as cofactor. Zn(2+) serves as cofactor.

It catalyses the reaction RNA(n) + a ribonucleoside 5'-triphosphate = RNA(n+1) + diphosphate. Its function is as follows. DNA-dependent RNA polymerase catalyzes the transcription of DNA into RNA using the four ribonucleoside triphosphates as substrates. The polypeptide is DNA-directed RNA polymerase subunit beta' (Vibrio campbellii (strain ATCC BAA-1116)).